Consider the following 682-residue polypeptide: Putative L-type lectin-domain containing receptor kinase I.1 (682 aa).

The N-terminal stretch at 1 to 19 (MAQRLHLLLLLFLICFVNL) is a signal peptide. Residues 20-292 (ISFSSQQDLS…RPKKPEKTSP (273 aa)) lie on the Extracellular side of the membrane. Positions 27 to 264 (DLSFIYNGFN…YQYILGWSFS (238 aa)) are legume-lectin like. N-linked (GlcNAc...) asparagine glycosylation is found at asparagine 60, asparagine 130, asparagine 187, asparagine 210, and asparagine 231. Residues 293-313 (LLIVLLIILAIIVMVVVGGFY) form a helical membrane-spanning segment. The Cytoplasmic segment spans residues 314 to 682 (LYRRKKYAEV…SHTIIYGDGR (369 aa)). The 275-residue stretch at 348-622 (FNKDGRLGRG…VQYINRHQRL (275 aa)) folds into the Protein kinase domain. ATP is bound by residues 354-362 (LGRGGFGEV) and lysine 376. The active-site Proton acceptor is aspartate 472.

This sequence in the C-terminal section; belongs to the protein kinase superfamily. Ser/Thr protein kinase family. In the N-terminal section; belongs to the leguminous lectin family.

The protein localises to the cell membrane. It carries out the reaction L-seryl-[protein] + ATP = O-phospho-L-seryl-[protein] + ADP + H(+). The enzyme catalyses L-threonyl-[protein] + ATP = O-phospho-L-threonyl-[protein] + ADP + H(+). Involved in resistance response to the pathogenic fungus Alternaria brassicicola. In Arabidopsis thaliana (Mouse-ear cress), this protein is Putative L-type lectin-domain containing receptor kinase I.1.